The primary structure comprises 107 residues: Large ribosomal subunit protein eL33B (107 aa).

Residue A2 is modified to N-acetylalanine; partial. K47 participates in a covalent cross-link: Glycyl lysine isopeptide (Lys-Gly) (interchain with G-Cter in ubiquitin).

The protein belongs to the eukaryotic ribosomal protein eL33 family. In terms of assembly, component of the large ribosomal subunit (LSU). Mature yeast ribosomes consist of a small (40S) and a large (60S) subunit. The 40S small subunit contains 1 molecule of ribosomal RNA (18S rRNA) and 33 different proteins (encoded by 57 genes). The large 60S subunit contains 3 rRNA molecules (25S, 5.8S and 5S rRNA) and 46 different proteins (encoded by 81 genes). Post-translationally, N-terminally acetylated by acetyltransferase NatA.

The protein localises to the cytoplasm. In terms of biological role, component of the ribosome, a large ribonucleoprotein complex responsible for the synthesis of proteins in the cell. The small ribosomal subunit (SSU) binds messenger RNAs (mRNAs) and translates the encoded message by selecting cognate aminoacyl-transfer RNA (tRNA) molecules. The large subunit (LSU) contains the ribosomal catalytic site termed the peptidyl transferase center (PTC), which catalyzes the formation of peptide bonds, thereby polymerizing the amino acids delivered by tRNAs into a polypeptide chain. The nascent polypeptides leave the ribosome through a tunnel in the LSU and interact with protein factors that function in enzymatic processing, targeting, and the membrane insertion of nascent chains at the exit of the ribosomal tunnel. This chain is Large ribosomal subunit protein eL33B, found in Saccharomyces cerevisiae (strain ATCC 204508 / S288c) (Baker's yeast).